Here is a 282-residue protein sequence, read N- to C-terminus: Plant cysteine oxidase 3 (282 aa).

Residues histidine 131, histidine 133, and histidine 202 each contribute to the Fe cation site.

The protein belongs to the cysteine dioxygenase family. Requires Fe(2+) as cofactor.

The protein localises to the nucleus. It localises to the cytoplasm. It carries out the reaction L-cysteine + O2 = 3-sulfino-L-alanine + H(+). Functionally, catalyzes the oxidation of N-terminal cysteine residues (N-Cys), thus preparing the protein for N-end rule pathway-mediated proteasomal degradation, upstream of the N-end rule enzymes ATE1, ATE2 and PRT6. Controls the preparation of the group VII ethylene response factor (ERF-VII) proteins for degradation via the 26S proteasome N-end rule pathway. Acts as an oxygen sensor that controls the stability of ERF-VII proteins, which are stabilized in flooding-induced hypoxia, and regulate transcriptional adaptation to these adverse conditions. This Arabidopsis thaliana (Mouse-ear cress) protein is Plant cysteine oxidase 3.